Reading from the N-terminus, the 380-residue chain is GATOR1 complex protein NPRL2 (380 aa).

The interaction with PDPK1 stretch occupies residues 1 to 133; it reads MGSSCRIECI…SKQKLVPIMT (133 aa). Residue Arg-78 participates in GDP binding. Position 78 is an asymmetric dimethylarginine (Arg-78). Residues Lys-158 and Lys-357 each participate in a glycyl lysine isopeptide (Lys-Gly) (interchain with G-Cter in ubiquitin) cross-link.

Belongs to the NPR2 family. As to quaternary structure, within the GATOR complex, component of the GATOR1 subcomplex, made of DEPDC5, NPRL2 and NPRL3. GATOR1 mediates the strong interaction of the GATOR complex with small GTPases Rag (RagA/RRAGA, RagB/RRAGB, RagC/RRAGC and/or RagD/RRAGD) heterodimers. GATOR1 interacts with GPR155/LYCHOS; interaction takes place in presence of cholesterol and prevents interaction between GATOR1 and KICSTOR. Interacts with PDPK1. In the presence of abundant amino acids, ubiquitinated at Lys-158 and Lys-357 via 'Lys-6'-linked ubiquitination by the WDR24 component of the GATOR2 complex, thereby inhibiting the GATOR1 complex and promoting mTORC1 activation. Post-translationally, asymmetric dimethylation at Arg-78 by PRMT1 inhibits the GTPase activator activity of the GATOR1 complex and consequently inducing timely mTORC1 activation under methionine-sufficient conditions.

The protein resides in the lysosome membrane. Its function is as follows. Catalytic component of the GATOR1 complex, a multiprotein complex that functions as an inhibitor of the amino acid-sensing branch of the mTORC1 pathway. In response to amino acid depletion, the GATOR1 complex has GTPase activating protein (GAP) activity and strongly increases GTP hydrolysis by RagA/RRAGA (or RagB/RRAGB) within heterodimeric Rag complexes, thereby turning them into their inactive GDP-bound form, releasing mTORC1 from lysosomal surface and inhibiting mTORC1 signaling. In the presence of abundant amino acids, the GATOR1 complex is ubiquitinated and inhibited by GATOR2. Within the GATOR1 complex, NPRL2 constitutes the catalytic subunit that mediates the GTPase activator activity and under methionine-sufficient conditions, the GTPase activator activity is inhibited by PRMT1 through methylation and consequently inducing timely mTORC1 activation. Suppresses Src-dependent tyrosine phosphorylation and activation of PDPK1 and its downstream signaling. Down-regulates PDPK1 kinase activity by interfering with tyrosine phosphorylation at 'Tyr-9', 'Tyr-373' and 'Tyr-376' residues. May act as a tumor suppressor. Suppresses cell growth and enhances sensitivity to various anticancer drugs. This is GATOR1 complex protein NPRL2 from Bos taurus (Bovine).